The chain runs to 263 residues: MLTAHKITVLINIFFIFSNYNNIKAHLVSYPSLTSLYGTSLKYFSVGILFTSNPIIFIIFVYSIRESFYSIFSSLVSGMLSIIISEAILFITYFWGILHFSLSPYPLYNEGIILTSSRMLILTITFILASASCMTACLQFLIEKGMSLEISSIVFIIYLLGECFASLQTTEYLHLGYCINDAISGTLFYCVTGLHFSHVIVGLLLLLIYFIRIVEMYDTNSEWSYSLYGISYIVLPHTDQITILYWHFVEIVWLFIEYFFYSE.

A run of 7 helical transmembrane segments spans residues 7–27, 44–64, 78–98, 120–140, 145–165, 191–211, and 241–261; these read ITVL…KAHL, FSVG…VYSI, GMLS…WGIL, LILT…CLQF, GMSL…ECFA, VTGL…IYFI, and ITIL…YFFY.

The protein belongs to the cytochrome c oxidase subunit 3 family. As to quaternary structure, component of the cytochrome c oxidase (complex IV, CIV), a multisubunit enzyme composed of a catalytic core of 3 subunits and several supernumerary subunits. The complex exists as a monomer or a dimer and forms supercomplexes (SCs) in the inner mitochondrial membrane with ubiquinol-cytochrome c oxidoreductase (cytochrome b-c1 complex, complex III, CIII).

The protein localises to the mitochondrion inner membrane. It carries out the reaction 4 Fe(II)-[cytochrome c] + O2 + 8 H(+)(in) = 4 Fe(III)-[cytochrome c] + 2 H2O + 4 H(+)(out). Its function is as follows. Component of the cytochrome c oxidase, the last enzyme in the mitochondrial electron transport chain which drives oxidative phosphorylation. The respiratory chain contains 3 multisubunit complexes succinate dehydrogenase (complex II, CII), ubiquinol-cytochrome c oxidoreductase (cytochrome b-c1 complex, complex III, CIII) and cytochrome c oxidase (complex IV, CIV), that cooperate to transfer electrons derived from NADH and succinate to molecular oxygen, creating an electrochemical gradient over the inner membrane that drives transmembrane transport and the ATP synthase. Cytochrome c oxidase is the component of the respiratory chain that catalyzes the reduction of oxygen to water. Electrons originating from reduced cytochrome c in the intermembrane space (IMS) are transferred via the dinuclear copper A center (CU(A)) of subunit 2 and heme A of subunit 1 to the active site in subunit 1, a binuclear center (BNC) formed by heme A3 and copper B (CU(B)). The BNC reduces molecular oxygen to 2 water molecules using 4 electrons from cytochrome c in the IMS and 4 protons from the mitochondrial matrix. This Plasmodium vivax protein is Cytochrome c oxidase subunit 3 (COIII).